The chain runs to 271 residues: Gap junction beta-5 protein (271 aa).

Residues 1–20 (MNWSVFEGLLSGVNKYSTAF) are Cytoplasmic-facing. A helical transmembrane segment spans residues 21–40 (GRIWLSLVFVFRVLVYLVTA). The Extracellular segment spans residues 41-75 (ERVWGDDQKDFDCNTRQPGCTNVCYDEFFPVSHVR). Residues 76-98 (LWALQLILVTCPSLLVVMHVAYR) traverse the membrane as a helical segment. Over 99–124 (KAREKKYQQEVGKGYLYPNPGKKRGG) the chain is Cytoplasmic. The helical transmembrane segment at 125–147 (LWWTYVCSLLFKATIDIIFLYLF) threads the bilayer. The Extracellular portion of the chain corresponds to 148-182 (HAFYPRYTLPSMVKCHSAPCPNTVDCFIAKPSEKN). Residues 183–205 (IFIVFMLVTAIVCILLNLVELLY) form a helical membrane-spanning segment. Over 206-271 (LVIKRCSECA…PRAHVKKTIL (66 aa)) the chain is Cytoplasmic. A disordered region spans residues 217–237 (AKRPPTAHAKNDPNWANPSSK).

Belongs to the connexin family. Beta-type (group I) subfamily. In terms of assembly, a connexon is composed of a hexamer of connexins. As to expression, expressed in skin.

The protein resides in the cell membrane. The protein localises to the cell junction. It is found in the gap junction. In terms of biological role, one gap junction consists of a cluster of closely packed pairs of transmembrane channels, the connexons, through which materials of low MW diffuse from one cell to a neighboring cell. This Rattus norvegicus (Rat) protein is Gap junction beta-5 protein (Gjb5).